The chain runs to 210 residues: Dynactin-associated protein (210 aa).

Residues 1 to 113 (MVADIKGNEQ…YCRNDWSMWK (113 aa)) lie on the Cytoplasmic side of the membrane. A helical; Signal-anchor for type II membrane protein membrane pass occupies residues 114 to 134 (VFLACLLACVIMTAIGVLIIC). Residues 135–210 (LVNNKGSANS…PITVAPTDHL (76 aa)) lie on the Extracellular side of the membrane. The disordered stretch occupies residues 168–210 (ACPPTMTTTSTVPASTATESTTSTATAATTSTEPITVAPTDHL). The span at 171 to 203 (PTMTTTSTVPASTATESTTSTATAATTSTEPIT) shows a compositional bias: low complexity.

As to quaternary structure, interacts with DCTN1 and DCTN2. As to expression, expressed in fibroblast and numerous cancer cell lines (at protein level).

The protein resides in the golgi apparatus membrane. The protein localises to the cell membrane. In terms of biological role, plays a role in the regulation of cell proliferation. Promotes activation of the AKT1 signaling pathway. Promotes phosphorylation of AKT1 at 'Ser-473'. The polypeptide is Dynactin-associated protein (DYNAP) (Homo sapiens (Human)).